The chain runs to 319 residues: Transcription factor bHLH111 (319 aa).

Positions 1 to 23 (MDHHHHIASRNSSTTSELPSFEP) are disordered. Over residues 9 to 18 (SRNSSTTSEL) the composition is skewed to polar residues. One can recognise a bHLH domain in the interval 195-244 (SEGSTLSPEKELPKAKLRDKITTLQQIVSPFGKTDTASVLQEAITYINFY).

As to quaternary structure, homodimer.

The protein resides in the nucleus. This Arabidopsis thaliana (Mouse-ear cress) protein is Transcription factor bHLH111 (BHLH111).